The following is a 279-amino-acid chain: Proline-rich protein 23D1 (279 aa).

2 disordered regions span residues 1-60 (MYGY…PHLN) and 247-270 (LRPM…RPPS). Positions 15–33 (TEPQNDNEGETSLATTQMN) are enriched in polar residues.

It belongs to the PRR23 family.

In Homo sapiens (Human), this protein is Proline-rich protein 23D1 (PRR23D1).